The following is a 331-amino-acid chain: Glycerophosphodiester phosphodiesterase 1 (331 aa).

The Cytoplasmic portion of the chain corresponds to 1-3; that stretch reads MWL. A helical transmembrane segment spans residues 4–24; that stretch reads WEDQGGLLGPFSFLLLVLLLV. The Lumenal segment spans residues 25 to 247; it reads TRSPVNACLL…KPRYDTFWKH (223 aa). Residues 65 to 331 enclose the GP-PDE domain; it reads ISAIAHRGGS…SMVEDCEPHF (267 aa). Residues Glu97 and Asp99 each contribute to the Mg(2+) site. Asn168 is a glycosylation site (N-linked (GlcNAc...) asparagine). Asp174 contributes to the Mg(2+) binding site. Asn198 carries an N-linked (GlcNAc...) asparagine glycan. The helical transmembrane segment at 248-268 threads the bilayer; that stretch reads FIFVMMDILLDWSMHNILWYL. The Cytoplasmic segment spans residues 269–331; it reads CGISAFLMQK…SMVEDCEPHF (63 aa).

It belongs to the glycerophosphoryl diester phosphodiesterase family. As to quaternary structure, interacts with PRAF2. Interacts with RGS16. It depends on Mg(2+) as a cofactor. Post-translationally, N-glycosylated. Widely expressed.

It is found in the cell membrane. The protein localises to the cytoplasmic vesicle membrane. The enzyme catalyses sn-glycero-3-phospho-1D-myo-inositol + H2O = myo-inositol + sn-glycerol 3-phosphate + H(+). It catalyses the reaction 1-O-(1Z-octadecenyl)-sn-glycero-3-phospho-(N-5Z,8Z,11Z,14Z-eicosatetraenoyl)-ethanolamine + H2O = 1-O-(1Z-octadecenyl)-sn-glycero-3-phosphate + N-(5Z,8Z,11Z,14Z-eicosatetraenoyl)-ethanolamine + H(+). It carries out the reaction 1-O-(1Z-octadecenyl)-sn-glycero-3-phospho-(N-9Z-octadecenoyl)-ethanolamine + H2O = 1-O-(1Z-octadecenyl)-sn-glycero-3-phosphate + N-(9Z-octadecenoyl) ethanolamine + H(+). The catalysed reaction is 1-O-(1Z-octadecenyl)-sn-glycero-3-phospho-N-hexadecanoyl-ethanolamine + H2O = 1-O-(1Z-octadecenyl)-sn-glycero-3-phosphate + N-hexadecanoylethanolamine + H(+). The enzyme catalyses N-(4Z,7Z,10Z,13Z,16Z,19Z)-docosahexaenoyl-sn-glycero-3-phosphoethanolamine + H2O = N-(4Z,7Z,10Z,13Z,16Z,19Z)-docosahexaenoyl ethanolamine + sn-glycerol 3-phosphate + H(+). It catalyses the reaction N-eicosanoyl-sn-glycero-3-phosphoethanolamine + H2O = N-eicosanoyl ethanolamine + sn-glycerol 3-phosphate + H(+). It carries out the reaction N-hexadecanoyl-sn-glycero-3-phosphoethanolamine + H2O = N-hexadecanoylethanolamine + sn-glycerol 3-phosphate + H(+). The catalysed reaction is N-(9Z-octadecenoyl)-sn-glycero-3-phosphoethanolamine + H2O = N-(9Z-octadecenoyl) ethanolamine + sn-glycerol 3-phosphate + H(+). The enzyme catalyses N-(5Z,8Z,11Z,14Z-eicosatetraenoyl)-sn-glycero-3-phosphoethanolamine + H2O = N-(5Z,8Z,11Z,14Z-eicosatetraenoyl)-ethanolamine + sn-glycerol 3-phosphate + H(+). With respect to regulation, inhibited by EDTA, calcium chloride, and zinc chloride. Enhanced by magnesium chloride. Glycerophosphodiester phosphodiesterase activity can be modulated by G-protein signaling pathways. Hydrolyzes the phosphodiester bond of glycerophosphodiesters such as glycerophosphoinositol (GroPIns) and glycerophosphoethanolamine (GroPEth), to yield a glycerol phosphate and an alcohol. Hydrolyzes glycerophospho-N-acylethanolamines to N-acylethanolamines in the brain and participates in bioactive N-acylethanolamine biosynthesis such as anandamide (an endocannabinoid), N-palmitoylethanolamine (an anti-inflammatory), and N-oleoylethanolamine (an anorexic). In addition, has a lysophospholipase D activity by hydrolyzing N-acyl-lysoplasmenylethanolamine (N-acyl-lysoPlsEt) to N-acylethanolamine. However lysophospholipase D activity is lower than glycerophosphodiester phosphodiesterase activity. Has little or no activity towards glycerophosphocholine. The polypeptide is Glycerophosphodiester phosphodiesterase 1 (Homo sapiens (Human)).